Here is a 427-residue protein sequence, read N- to C-terminus: C4-dicarboxylate TRAP transporter large permease protein DctM (427 aa).

13 helical membrane-spanning segments follow: residues 2 to 22 (TILF…PIAV), 55 to 75 (TLLA…GGVA), 91 to 111 (GGLA…SGSS), 115 to 135 (VAAV…PQAF), 138 to 158 (GIVC…VMVV), 171 to 191 (FIAG…VIYI), 216 to 236 (ALWG…GAFT), 237 to 257 (PTEA…FVYR), 274 to 294 (LTIM…VLTT), 310 to 330 (LSPW…GNFM), 335 to 355 (IILI…IDPI), 359 to 379 (IIMV…LNLF), and 396 to 416 (ALPW…IPAV).

It belongs to the TRAP transporter large permease family. The complex comprises the extracytoplasmic solute receptor protein DctP, and the two transmembrane proteins DctQ and DctM.

The protein localises to the cell inner membrane. Functionally, part of the tripartite ATP-independent periplasmic (TRAP) transport system DctPQM involved in C4-dicarboxylates uptake. This chain is C4-dicarboxylate TRAP transporter large permease protein DctM, found in Pseudomonas aeruginosa (strain ATCC 15692 / DSM 22644 / CIP 104116 / JCM 14847 / LMG 12228 / 1C / PRS 101 / PAO1).